The following is a 200-amino-acid chain: uncharacterized protein (200 aa).

The N-terminal stretch at 1–19 is a signal peptide; the sequence is MNAMFHSLFALSFVSLVAS. Residues 148 to 168 form a helical membrane-spanning segment; sequence FMVIVSLAAFCISVLAGLALQ.

It localises to the membrane. This is an uncharacterized protein from Caenorhabditis elegans.